A 438-amino-acid chain; its full sequence is EF-hand calcium-binding domain-containing protein 3 (438 aa).

EF-hand domains follow at residues 47-82 and 83-118; these read SQMA…LGMN and LTKH…KNLF. The Ca(2+) site is built by D96, D98, D100, K102, and D107. The residue at position 279 (Y279) is a Phosphotyrosine. A compositionally biased stretch (low complexity) spans 405 to 415; it reads SSHNSRSSSSS. A disordered region spans residues 405–438; the sequence is SSHNSRSSSSSDTSECYTDSGRKRKRKGLKGFQQ. Basic residues predominate over residues 426 to 438; the sequence is RKRKRKGLKGFQQ.

In Homo sapiens (Human), this protein is EF-hand calcium-binding domain-containing protein 3 (EFCAB3).